The following is a 466-amino-acid chain: Coagulation factor IX (466 aa).

An N-terminal signal peptide occupies residues 1–25 (MRCLNMIMAEPPGLITICLLGYLLG). A propeptide spanning residues 26 to 46 (ADCTVFLDHEDATKVLSRPKR) is cleaved from the precursor. Ca(2+)-binding residues include tyrosine 47, asparagine 48, glutamate 53, glutamate 54, glutamate 61, glutamate 63, glutamate 66, glutamate 67, glutamate 72, glutamate 73, and glutamate 76. Positions 47–92 (YNSGKLEEFVQGNLERECMEEKCSFEEAREVFENTEKTTEFWKQYV) constitute a Gla domain. Glutamate 53, glutamate 54, glutamate 61, glutamate 63, glutamate 66, glutamate 67, glutamate 72, glutamate 73, glutamate 76, glutamate 79, and glutamate 82 each carry 4-carboxyglutamate. Glutamate 61 lines the Mg(2+) pocket. The cysteines at positions 64 and 69 are disulfide-linked. Residue glutamate 66 coordinates Mg(2+). Glutamate 72 is a Mg(2+) binding site. Residue glutamate 76 coordinates Mg(2+). Position 82 (glutamate 82) interacts with Ca(2+). Glutamate 82 is a Mg(2+) binding site. Residue threonine 85 is glycosylated (O-linked (GalNAc...) threonine). Glutamate 86, aspartate 93, glycine 94, and glutamine 96 together coordinate Ca(2+). Glutamate 86 is modified (4-carboxyglutamate). Glutamate 86 contacts Mg(2+). Positions 93-129 (DGDQCESNPCLNGGICKDDINSYECWCQTGFEGKNCE) constitute an EGF-like 1; calcium-binding domain. Intrachain disulfides connect cysteine 97/cysteine 108, cysteine 102/cysteine 117, cysteine 119/cysteine 128, cysteine 134/cysteine 145, cysteine 141/cysteine 155, cysteine 157/cysteine 170, cysteine 178/cysteine 340, cysteine 257/cysteine 273, cysteine 387/cysteine 401, and cysteine 412/cysteine 440. Serine 99 is a glycosylation site (O-linked (Glc...) serine). Residues aspartate 110 and aspartate 111 each coordinate Ca(2+). Aspartate 110 bears the (3R)-3-hydroxyaspartate mark. At serine 114 the chain carries Phosphoserine. In terms of domain architecture, EGF-like 2 spans 130-171 (LDVTCNIKNGRCKQFCKLDADNKVVCSCTTGYQLAEDQKSCE). Residues 193–231 (AETLFLNMDYENSTTDYENSAEAEKNVDNVTQPLNDLTR) constitute a propeptide, activation peptide. A Sulfotyrosine modification is found at tyrosine 202. Serine 205 is modified (phosphoserine). Position 206 is a phosphothreonine; alternate (threonine 206). Threonine 206 carries an O-linked (GalNAc...) threonine; alternate glycan. Asparagine 221 carries N-linked (GlcNAc...) asparagine glycosylation. Threonine 223 and threonine 230 each carry an O-linked (GalNAc...) threonine glycan. The Peptidase S1 domain maps to 232 to 464 (IVGGKTAKPG…YVNWIKEKTK (233 aa)). The Charge relay system role is filled by histidine 272. Residues glutamate 286, asparagine 288, glutamate 291, glutamate 293, and glutamate 296 each contribute to the Ca(2+) site. Aspartate 320 acts as the Charge relay system in catalysis. The active-site Charge relay system is serine 416.

Belongs to the peptidase S1 family. Heterodimer of a light chain and a heavy chain; disulfide-linked. Interacts (inactive and activated) with F11 (activated) in calcium-dependent manner. Interacts with SERPINC1. The iron and 2-oxoglutarate dependent 3-hydroxylation of aspartate and asparagine is (R) stereospecific within EGF domains. In terms of processing, activated by factor XIa, which excises the activation peptide. The propeptide can also be removed by snake venom protease. Activated by coagulation factor VIIa-tissue factor (F7-F3) complex in calcium-dependent manner. Post-translationally, predominantly O-glucosylated at Ser-99 by POGLUT1 in vitro.

It is found in the secreted. The enzyme catalyses Selective cleavage of Arg-|-Ile bond in factor X to form factor Xa.. Factor IX is a vitamin K-dependent plasma protein that participates in the intrinsic pathway of blood coagulation by converting factor X to its active form in the presence of Ca(2+) ions, phospholipids, and factor VIIIa. This Felis catus (Cat) protein is Coagulation factor IX (F9).